We begin with the raw amino-acid sequence, 604 residues long: MSMLRLYTRVLQLLGGEARLGWILAFANLLLAGAQFAEPVLFGRIVDVLSGNLSTGALQTSVASPWPLLGAWVAFGLFTILCSAAVALHADRLAHRQRQAILTSYFEHIMQLPLTYHTGTHSGRLMKVMLQGTDALWRLWLGFFREHFAAILSLVVLLPLALYINWRLAILLFILCVVFTVLTTLVVHKTYSMQGEVEEQYSDLSARASDALGNVALVQSFVRIDAEVQGLRFVADRLLALQMPVLSWWALVTVITRASTTITVLAIFTVGIALHEQGLTSVGEIVMFVSFATLLIQKLEQVVSFINSVFMEAPRLQEFFNVLDAVPAVRDRPDAVDPERLQGLVEFKDVSFSYDGKRPAVADLSFTARPGETIALVGATGAGKSTAIALLHRAFDPQSGVIRIDGLDVRDLTLAGLRRNIGVVFQEALLFNRSIADNLRVGKPDATEEEMRTAASRAQALDFIERSEQKFDTNAGERGRMLSGGERQRLSIARALLKDPPILILDEATSALDAVTEAKVNLALDEVMKGRTTFVIAHRLSTIRHATRILVFEAGRVIESGTFDELLARQGHFAALARAQFMVQETSRANMAAPLEHAASAKIS.

The ABC transmembrane type-1 domain maps to 21–311 (GWILAFANLL…VVSFINSVFM (291 aa)). 6 helical membrane passes run 22 to 42 (WILA…PVLF), 68 to 88 (LLGA…AVAL), 146 to 166 (EHFA…YINW), 168 to 188 (LAIL…LVVH), 238 to 258 (LLAL…ITRA), and 285 to 305 (IVMF…VVSF). Positions 345–579 (VEFKDVSFSY…QGHFAALARA (235 aa)) constitute an ABC transporter domain. 378-385 (GATGAGKS) lines the ATP pocket.

This sequence belongs to the ABC transporter superfamily. Beta-(1--&gt;2)glucan exporter (TC 3.A.1.108.1) family. In terms of assembly, homodimer.

The protein localises to the cell inner membrane. It carries out the reaction [(1-&gt;2)-beta-D-glucosyl](n)(in) + ATP + H2O = [(1-&gt;2)-beta-D-glucosyl](n)(out) + ADP + phosphate + H(+). In terms of biological role, involved in beta-(1--&gt;2)glucan export. Transmembrane domains (TMD) form a pore in the inner membrane and the ATP-binding domain (NBD) is responsible for energy generation. The sequence is that of Beta-(1--&gt;2)glucan export ATP-binding/permease protein NdvA from Rhodopseudomonas palustris (strain BisB18).